A 369-amino-acid polypeptide reads, in one-letter code: 3,7-dimethylxanthine N-methyltransferase TCS1 (369 aa).

Tyr-24 serves as a coordination point for S-adenosyl-L-homocysteine. Caffeine is bound at residue Thr-31. Cys-66, Asn-71, Asp-103, Leu-104, Ser-138, and Phe-139 together coordinate S-adenosyl-L-homocysteine. The caffeine site is built by Tyr-156, His-159, and Trp-160. Asn-177 is a Mg(2+) binding site. Arg-225 is a caffeine binding site. Mg(2+) is bound by residues Asp-263, Phe-265, and Asn-266. Phe-321 is a binding site for caffeine.

This sequence belongs to the methyltransferase superfamily. Type-7 methyltransferase family. It depends on Mg(2+) as a cofactor. In terms of tissue distribution, expressed in young leaves and flowers.

It carries out the reaction 7-methylxanthine + S-adenosyl-L-methionine = theobromine + S-adenosyl-L-homocysteine + H(+). The catalysed reaction is theobromine + S-adenosyl-L-methionine = caffeine + S-adenosyl-L-homocysteine + H(+). The enzyme catalyses 1,7-dimethylxanthine + S-adenosyl-L-methionine = caffeine + S-adenosyl-L-homocysteine + H(+). It participates in alkaloid biosynthesis. Functionally, involved in the biosynthesis of caffeine. Catalyzes the conversion of 7-methylxanthine (7mX) to theobromine and of theobromine to caffeine. Has 3-N- and 1-N-methylation activity. In Camellia sinensis (Tea plant), this protein is 3,7-dimethylxanthine N-methyltransferase TCS1.